Reading from the N-terminus, the 92-residue chain is uncharacterized protein (92 aa).

An N-terminal signal peptide occupies residues Met1–Glu29.

This is an uncharacterized protein from Bacillus subtilis (strain 168).